Here is a 401-residue protein sequence, read N- to C-terminus: Mu-type opioid receptor (401 aa).

Residues 1 to 69 (MDSSAVPANA…CPPTGSPSMI (69 aa)) are Extracellular-facing. N-linked (GlcNAc...) asparagine glycans are attached at residues asparagine 9, asparagine 12, asparagine 34, asparagine 41, and asparagine 49. A helical transmembrane segment spans residues 70 to 94 (TAITIMALYSIVCVVGLFGNFLVMY). Topologically, residues 95-107 (VIVRYTKMKTATN) are cytoplasmic. A helical membrane pass occupies residues 108–132 (IYIFNLALADALATSTLPFQSVNYL). Residues 133 to 143 (MGTWPFGTILC) lie on the Extracellular side of the membrane. Cysteine 143 and cysteine 220 are joined by a disulfide. A helical transmembrane segment spans residues 144–166 (KIVISIDYYNMFTSIFTLCTMSV). Residues 167-186 (DRYIAVCHPVKALDFRTPRN) are Cytoplasmic-facing. Position 169 is a phosphotyrosine (tyrosine 169). A helical membrane pass occupies residues 187-208 (AKIINVCNWILSSAIGLPVMFM). At 209–231 (ATTKYRHGSIDCTLTFSHPTWYW) the chain is on the extracellular side. A helical membrane pass occupies residues 232-256 (ENLLKICVFIFAFIMPVLIITVCYG). At 257–280 (LMILRLKSVRMLSGSKEKDRNLRR) the chain is on the cytoplasmic side. Residues 281 to 307 (ITRMVLVVVAVFIVCWTPIHIYVIIKA) form a helical membrane-spanning segment. Residues 308 to 315 (LVTIPETT) lie on the Extracellular side of the membrane. Residues 316–339 (FQTVSWHFCIALGYTNSCLNPVLY) traverse the membrane as a helical segment. Residues 335 to 339 (NPVLY) carry the NPxxY; plays a role in stabilizing the activated conformation of the receptor motif. The Cytoplasmic portion of the chain corresponds to 340 to 401 (AFLDENFKRC…NLEAETAPLP (62 aa)). Residue cysteine 354 is the site of S-palmitoyl cysteine attachment. Residues 365-388 (NSTRIRQNTRDHPSTANTVDRTNH) are disordered. Residue serine 366 is modified to Phosphoserine. Threonine 373 bears the Phosphothreonine mark. Residue serine 378 is modified to Phosphoserine. Threonine 397 is subject to Phosphothreonine.

It belongs to the G-protein coupled receptor 1 family. Forms homooligomers and heterooligomers with other GPCRs, such as OPRD1, OPRK1, OPRL1, NPFFR2, ADRA2A, SSTR2, CNR1 and CCR5 (probably in dimeric forms). Interacts with heterotrimeric G proteins; interaction with a heterotrimeric complex containing GNAI1, GNB1 and GNG2 stabilizes the active conformation of the receptor and increases its affinity for endomorphin-2, the synthetic opioid peptide DAMGO and for morphinan agonists. Interacts with PPL; the interaction disrupts agonist-mediated G-protein activation. Interacts (via C-terminus) with DNAJB4 (via C-terminus). Interacts with calmodulin; the interaction inhibits the constitutive activity of OPRM1; it abolishes basal and attenuates agonist-stimulated G-protein coupling. Interacts with FLNA, PLD2, RANBP9 and WLS and GPM6A. Interacts with RTP4. Interacts with SYP and GNAS. Interacts with RGS9, RGS17, RGS20, RGS4, PPP1R9B and HINT1. In terms of processing, phosphorylated. Differentially phosphorylated in basal and agonist-induced conditions. Agonist-mediated phosphorylation modulates receptor internalization. Phosphorylated by GRK2 in a agonist-dependent manner. Phosphorylation at Tyr-169 requires receptor activation, is dependent on non-receptor protein tyrosine kinase Src and results in a decrease in agonist efficacy by reducing G-protein coupling efficiency. Phosphorylated on tyrosine residues; the phosphorylation is involved in agonist-induced G-protein-independent receptor down-regulation. Phosphorylation at Ser-378 is involved in G-protein-dependent but not beta-arrestin-dependent activation of the ERK pathway. Post-translationally, ubiquitinated. A basal ubiquitination seems not to be related to degradation. Ubiquitination is increased upon formation of OPRM1:OPRD1 oligomers leading to proteasomal degradation; the ubiquitination is diminished by RTP4.

The protein localises to the cell membrane. It localises to the cell projection. It is found in the axon. The protein resides in the perikaryon. Its subcellular location is the dendrite. The protein localises to the endosome. Its function is as follows. Receptor for endogenous opioids such as beta-endorphin and endomorphin. Receptor for natural and synthetic opioids including morphine, heroin, DAMGO, fentanyl, etorphine, buprenorphin and methadone. Also activated by enkephalin peptides, such as Met-enkephalin or Met-enkephalin-Arg-Phe, with higher affinity for Met-enkephalin-Arg-Phe. Agonist binding to the receptor induces coupling to an inactive GDP-bound heterotrimeric G-protein complex and subsequent exchange of GDP for GTP in the G-protein alpha subunit leading to dissociation of the G-protein complex with the free GTP-bound G-protein alpha and the G-protein beta-gamma dimer activating downstream cellular effectors. The agonist- and cell type-specific activity is predominantly coupled to pertussis toxin-sensitive G(i) and G(o) G alpha proteins, GNAI1, GNAI2, GNAI3 and GNAO1, and to a lesser extent to pertussis toxin-insensitive G alpha proteins GNAZ and GNA15. They mediate an array of downstream cellular responses, including inhibition of adenylate cyclase activity and both N-type and L-type calcium channels, activation of inward rectifying potassium channels, mitogen-activated protein kinase (MAPK), phospholipase C (PLC), phosphoinositide/protein kinase (PKC), phosphoinositide 3-kinase (PI3K) and regulation of NF-kappa-B. Also couples to adenylate cyclase stimulatory G alpha proteins. The selective temporal coupling to G-proteins and subsequent signaling can be regulated by RGSZ proteins, such as RGS9, RGS17 and RGS4. Phosphorylation by members of the GPRK subfamily of Ser/Thr protein kinases and association with beta-arrestins is involved in short-term receptor desensitization. Beta-arrestins associate with the GPRK-phosphorylated receptor and uncouple it from the G-protein thus terminating signal transduction. The phosphorylated receptor is internalized through endocytosis via clathrin-coated pits which involves beta-arrestins. The activation of the ERK pathway occurs either in a G-protein-dependent or a beta-arrestin-dependent manner and is regulated by agonist-specific receptor phosphorylation. Acts as a class A G-protein coupled receptor (GPCR) which dissociates from beta-arrestin at or near the plasma membrane and undergoes rapid recycling. Receptor down-regulation pathways are varying with the agonist and occur dependent or independent of G-protein coupling. Endogenous ligands induce rapid desensitization, endocytosis and recycling. Heterooligomerization with other GPCRs can modulate agonist binding, signaling and trafficking properties. Involved in neurogenesis. The polypeptide is Mu-type opioid receptor (OPRM1) (Pan troglodytes (Chimpanzee)).